Here is a 154-residue protein sequence, read N- to C-terminus: UPF0756 membrane protein EAT1b_0668 (154 aa).

5 helical membrane-spanning segments follow: residues 5–25, 52–72, 82–102, 107–127, and 129–149; these read LFLLMLVLIGVISNNQSVIIA, WGVTIITIAVLVPIATGDIGF, PVGIVAFASGMFVAIAAGQGV, VDPVVTTALLAGTILAVGFMK, and IPVGPLVGAGIAALILGGYQV.

It belongs to the UPF0756 family.

The protein resides in the cell membrane. This chain is UPF0756 membrane protein EAT1b_0668, found in Exiguobacterium sp. (strain ATCC BAA-1283 / AT1b).